Reading from the N-terminus, the 27-residue chain is Phospholipase A2 1 (27 aa).

The protein belongs to the phospholipase A2 family. Group I subfamily. Requires Ca(2+) as cofactor. Expressed by the venom gland.

The protein localises to the secreted. The catalysed reaction is a 1,2-diacyl-sn-glycero-3-phosphocholine + H2O = a 1-acyl-sn-glycero-3-phosphocholine + a fatty acid + H(+). Its function is as follows. Snake venom phospholipase A2 (PLA2) that inhibits neuromuscular transmission by blocking acetylcholine release from the nerve termini. PLA2 catalyzes the calcium-dependent hydrolysis of the 2-acyl groups in 3-sn-phosphoglycerides. This chain is Phospholipase A2 1, found in Micrurus nigrocinctus (Central American coral snake).